Consider the following 362-residue polypeptide: Lipoprotein p35 (362 aa).

An N-terminal signal peptide occupies residues 1–30; sequence MKIKKIKLLKALALTGAFGIVATVPVIVSS. C31 is lipidated: N-palmitoyl cysteine. C31 carries S-diacylglycerol cysteine lipidation. The tract at residues 33-53 is disordered; the sequence is STSENNGNGNGNGGTDGNTQQ.

The protein belongs to the p35 lipoprotein family. Post-translationally, the N-terminus is blocked.

It localises to the cell membrane. Functionally, major M.penetrans antigen. The chain is Lipoprotein p35 from Malacoplasma penetrans (strain HF-2) (Mycoplasma penetrans).